A 202-amino-acid polypeptide reads, in one-letter code: LexA repressor (202 aa).

Positions 28–48 form a DNA-binding region, H-T-H motif; sequence RAEIAQRLGFRSPNAAEEHLK. Catalysis depends on for autocatalytic cleavage activity residues Ser-119 and Lys-156.

It belongs to the peptidase S24 family. In terms of assembly, homodimer.

It catalyses the reaction Hydrolysis of Ala-|-Gly bond in repressor LexA.. Its function is as follows. Represses a number of genes involved in the response to DNA damage (SOS response), including recA and lexA. Binds to the 16 bp palindromic sequence 5'-CTGTATATATATACAG-3'. In the presence of single-stranded DNA, RecA interacts with LexA causing an autocatalytic cleavage which disrupts the DNA-binding part of LexA, leading to derepression of the SOS regulon and eventually DNA repair. This Edwardsiella ictaluri (strain 93-146) protein is LexA repressor.